A 432-amino-acid polypeptide reads, in one-letter code: Adenylosuccinate synthetase (432 aa).

GTP is bound by residues 13-19 (GDEGKGK) and 41-43 (GHT). Catalysis depends on Asp-14, which acts as the Proton acceptor. Mg(2+)-binding residues include Asp-14 and Gly-41. IMP contacts are provided by residues 14-17 (DEGK), 39-42 (NAGH), Thr-130, Arg-144, Gln-225, Thr-240, and Arg-304. The active-site Proton donor is the His-42. A substrate-binding site is contributed by 300 to 306 (ATTGRSR). GTP is bound by residues Arg-306, 332 to 334 (KLD), and 415 to 417 (STG).

It belongs to the adenylosuccinate synthetase family. As to quaternary structure, homodimer. Mg(2+) is required as a cofactor.

It localises to the cytoplasm. The catalysed reaction is IMP + L-aspartate + GTP = N(6)-(1,2-dicarboxyethyl)-AMP + GDP + phosphate + 2 H(+). Its pathway is purine metabolism; AMP biosynthesis via de novo pathway; AMP from IMP: step 1/2. Plays an important role in the de novo pathway of purine nucleotide biosynthesis. Catalyzes the first committed step in the biosynthesis of AMP from IMP. The polypeptide is Adenylosuccinate synthetase (Yersinia pseudotuberculosis serotype O:1b (strain IP 31758)).